A 752-amino-acid polypeptide reads, in one-letter code: Photosystem I P700 chlorophyll a apoprotein A1 (752 aa).

8 helical membrane passes run 73–96 (IFSA…FHGA), 159–182 (LYVT…FHYH), 198–222 (MNHH…HVSL), 294–312 (RAHH…GHMY), 349–372 (WHAQ…HHMY), 388–414 (LCLF…IFMV), 436–458 (AIIS…LYIH), and 533–551 (FLVH…LILL). Residues Cys575 and Cys584 each contribute to the [4Fe-4S] cluster site. A run of 2 helical transmembrane segments spans residues 591–612 (HVFL…HFSW) and 666–688 (LSAY…MFLF). Residue His677 coordinates chlorophyll a'. Residues Met685 and Tyr693 each contribute to the chlorophyll a site. Residue Trp694 participates in phylloquinone binding. Residues 726 to 746 (AVGVAHYLLGGIATTWSFFHA) traverse the membrane as a helical segment.

Belongs to the PsaA/PsaB family. As to quaternary structure, the PsaA/B heterodimer binds the P700 chlorophyll special pair and subsequent electron acceptors. PSI consists of a core antenna complex that captures photons, and an electron transfer chain that converts photonic excitation into a charge separation. The eukaryotic PSI reaction center is composed of at least 11 subunits. P700 is a chlorophyll a/chlorophyll a' dimer, A0 is one or more chlorophyll a, A1 is one or both phylloquinones and FX is a shared 4Fe-4S iron-sulfur center. is required as a cofactor.

It localises to the plastid. The protein resides in the cyanelle thylakoid membrane. It carries out the reaction reduced [plastocyanin] + hnu + oxidized [2Fe-2S]-[ferredoxin] = oxidized [plastocyanin] + reduced [2Fe-2S]-[ferredoxin]. Functionally, psaA and PsaB bind P700, the primary electron donor of photosystem I (PSI), as well as the electron acceptors A0, A1 and FX. PSI is a cytochrome c6-ferredoxin oxidoreductase, converting photonic excitation into a charge separation, which transfers an electron from the donor P700 chlorophyll pair to the spectroscopically characterized acceptors A0, A1, FX, FA and FB in turn. Oxidized P700 is reduced on the lumenal side of the thylakoid membrane by cytochrome c6. This Cyanophora paradoxa protein is Photosystem I P700 chlorophyll a apoprotein A1.